A 144-amino-acid polypeptide reads, in one-letter code: Large ribosomal subunit protein uL15 (144 aa).

Residues 1–49 form a disordered region; that stretch reads MIKLECLQDPSPRKRRTKLLGRGPSSGHGKTSSRGHKGDCSRSGYKRRF.

This sequence belongs to the universal ribosomal protein uL15 family. As to quaternary structure, part of the 50S ribosomal subunit.

Functionally, binds to the 23S rRNA. The polypeptide is Large ribosomal subunit protein uL15 (Chlamydia trachomatis serovar A (strain ATCC VR-571B / DSM 19440 / HAR-13)).